A 547-amino-acid polypeptide reads, in one-letter code: MAAKDVKFGNDARVKMLNGVNILADAVKVTLGPKGRNVVLDKSFGAPTITKDGVSVAREIELEDKFENMGAQMVKEVASKANDAAGDGTTTATVLAQAIVNEGLKAVAAGMNPMDLKRGIDKAVNSVVAELKNLSKPCETSKEIEQVGTISANSDSIVGQLIAQAMEKVGKEGVITVEDGTGLEDELDVVEGMQFDRGYLSPYFINKPETATVELDNPFILLVDKKISNIRELLPVLEGVAKAGKPLLIIAEDVEGEALATLVVNTMRGIVKVAAVKAPGFGDRRKAMLQDIAILTAGTVISEEIGMELEKATLEDLGQAKRIVINKDNTTIIDGIGDEAQIQGRVAQIRQQIEESTSDYDKEKLQERVAKLAGGVAVIKVGAATEVEMKEKKARVEDALHATRAAVEEGIVAGGGVALIRAAGRVVGLQGENEEQNVGIKLALRAMEAPLRQIVANAGEEASVIASAVKNGEGNFGYNAGTEQYGDMIAMGILDPTKVTRSALQFAASVAGLMITTECMVTELPKDDKADLGAAGMGGMGGMGGMM.

ATP contacts are provided by residues 30-33, Lys-51, 87-91, Gly-415, and Asp-495; these read TLGP and DGTTT.

It belongs to the chaperonin (HSP60) family. In terms of assembly, forms a cylinder of 14 subunits composed of two heptameric rings stacked back-to-back. Interacts with the co-chaperonin GroES.

The protein localises to the cytoplasm. The catalysed reaction is ATP + H2O + a folded polypeptide = ADP + phosphate + an unfolded polypeptide.. In terms of biological role, together with its co-chaperonin GroES, plays an essential role in assisting protein folding. The GroEL-GroES system forms a nano-cage that allows encapsulation of the non-native substrate proteins and provides a physical environment optimized to promote and accelerate protein folding. This is Chaperonin GroEL from Aggregatibacter actinomycetemcomitans (Actinobacillus actinomycetemcomitans).